Reading from the N-terminus, the 428-residue chain is Enolase (428 aa).

Gln-164 provides a ligand contact to (2R)-2-phosphoglycerate. Glu-208 (proton donor) is an active-site residue. Mg(2+) contacts are provided by Asp-245, Glu-286, and Asp-313. 4 residues coordinate (2R)-2-phosphoglycerate: Lys-338, Arg-367, Ser-368, and Lys-389. The active-site Proton acceptor is the Lys-338.

This sequence belongs to the enolase family. Mg(2+) serves as cofactor.

It localises to the cytoplasm. The protein localises to the secreted. The protein resides in the cell surface. The catalysed reaction is (2R)-2-phosphoglycerate = phosphoenolpyruvate + H2O. It functions in the pathway carbohydrate degradation; glycolysis; pyruvate from D-glyceraldehyde 3-phosphate: step 4/5. In terms of biological role, catalyzes the reversible conversion of 2-phosphoglycerate (2-PG) into phosphoenolpyruvate (PEP). It is essential for the degradation of carbohydrates via glycolysis. This is Enolase from Pyrococcus abyssi (strain GE5 / Orsay).